The chain runs to 529 residues: UDP-glucuronosyltransferase 2B23 (529 aa).

Positions 1 to 24 (MSVKWTSVILLIQLSFYFSSGSCG) are cleaved as a signal peptide. 2 N-linked (GlcNAc...) asparagine glycosylation sites follow: Asn-67 and Asn-68. The chain crosses the membrane as a helical span at residues 494–514 (IGFLLACVATVIFIIMKCCLF).

This sequence belongs to the UDP-glycosyltransferase family. Expressed in several tissues, including the prostate, mammary gland, epididymis, testis and ovary.

It is found in the microsome membrane. The protein resides in the endoplasmic reticulum membrane. It catalyses the reaction glucuronate acceptor + UDP-alpha-D-glucuronate = acceptor beta-D-glucuronoside + UDP + H(+). UDPGTs are of major importance in the conjugation and subsequent elimination of potentially toxic xenobiotics and endogenous compounds. This isozyme has glucuronidating capacity on 6 steroids and the bile acid, hyodeoxycholic acid. May potentially play an important role in estrogen and androgen catabolism in peripheral steroid target tissues. This is UDP-glucuronosyltransferase 2B23 (UGT2B23) from Macaca fascicularis (Crab-eating macaque).